Reading from the N-terminus, the 445-residue chain is Glycine--tRNA ligase (445 aa).

Positions 97 and 145 each coordinate substrate. Residues R177–E179, F187–F192, E262–I263, and G308–R311 each bind ATP. F192 to E196 contacts substrate. E304–G308 is a substrate binding site.

Belongs to the class-II aminoacyl-tRNA synthetase family. As to quaternary structure, homodimer.

It localises to the cytoplasm. The enzyme catalyses tRNA(Gly) + glycine + ATP = glycyl-tRNA(Gly) + AMP + diphosphate. Its function is as follows. Catalyzes the attachment of glycine to tRNA(Gly). The protein is Glycine--tRNA ligase of Borrelia hermsii (strain HS1 / DAH).